A 112-amino-acid polypeptide reads, in one-letter code: MADFSRLPGPNADLWDWQLLAACRGVDSSLFFHPEGERGAARSARENSAKEVCMRCPVRAECAAHALAVREPYGVWGGLTEDEREELMGRARNRLVAATASASAGGEAAGPH.

One can recognise a 4Fe-4S Wbl-type domain in the interval 22-86 (ACRGVDSSLF…GGLTEDEREE (65 aa)). [4Fe-4S] cluster contacts are provided by cysteine 23, cysteine 53, cysteine 56, and cysteine 62.

It belongs to the WhiB family. The 4Fe-4S form is a monomer; upon oxidation forms a disulfide-bonded homodimer. It depends on [4Fe-4S] cluster as a cofactor. Post-translationally, can be nitrosylated by NO, 8 NO react per cluster. These complexes are quite stable under anaerobic conditions, but degrade slowly aerobically. Upon Fe-S cluster removal intramolecular disulfide bonds are formed.

Its subcellular location is the cytoplasm. Acts as a transcriptional regulator. Probably redox-responsive. The apo- but not holo-form probably binds DNA. Plays a positive role in prespore maturation and the initiation of sporulation septation. This Streptomyces coelicolor (strain ATCC BAA-471 / A3(2) / M145) protein is Transcriptional regulator WhiD (whiD).